The primary structure comprises 318 residues: Methionyl-tRNA formyltransferase (318 aa).

112–115 (SILP) provides a ligand contact to (6S)-5,6,7,8-tetrahydrofolate.

This sequence belongs to the Fmt family.

It carries out the reaction L-methionyl-tRNA(fMet) + (6R)-10-formyltetrahydrofolate = N-formyl-L-methionyl-tRNA(fMet) + (6S)-5,6,7,8-tetrahydrofolate + H(+). In terms of biological role, attaches a formyl group to the free amino group of methionyl-tRNA(fMet). The formyl group appears to play a dual role in the initiator identity of N-formylmethionyl-tRNA by promoting its recognition by IF2 and preventing the misappropriation of this tRNA by the elongation apparatus. The chain is Methionyl-tRNA formyltransferase from Shewanella oneidensis (strain ATCC 700550 / JCM 31522 / CIP 106686 / LMG 19005 / NCIMB 14063 / MR-1).